The chain runs to 255 residues: Pyrroloquinoline-quinone synthase (255 aa).

Belongs to the PqqC family.

It carries out the reaction 6-(2-amino-2-carboxyethyl)-7,8-dioxo-1,2,3,4,7,8-hexahydroquinoline-2,4-dicarboxylate + 3 O2 = pyrroloquinoline quinone + 2 H2O2 + 2 H2O + H(+). Its pathway is cofactor biosynthesis; pyrroloquinoline quinone biosynthesis. Its function is as follows. Ring cyclization and eight-electron oxidation of 3a-(2-amino-2-carboxyethyl)-4,5-dioxo-4,5,6,7,8,9-hexahydroquinoline-7,9-dicarboxylic-acid to PQQ. The sequence is that of Pyrroloquinoline-quinone synthase from Cereibacter sphaeroides (strain ATCC 17023 / DSM 158 / JCM 6121 / CCUG 31486 / LMG 2827 / NBRC 12203 / NCIMB 8253 / ATH 2.4.1.) (Rhodobacter sphaeroides).